A 326-amino-acid polypeptide reads, in one-letter code: Glycerol-3-phosphate dehydrogenase [NAD(P)+] (326 aa).

NADPH is bound by residues tryptophan 13, arginine 33, and lysine 107. Sn-glycerol 3-phosphate-binding residues include lysine 107, glycine 135, and serine 137. Alanine 139 contributes to the NADPH binding site. Residues lysine 190, aspartate 243, serine 253, arginine 254, and asparagine 255 each contribute to the sn-glycerol 3-phosphate site. Lysine 190 acts as the Proton acceptor in catalysis. Arginine 254 serves as a coordination point for NADPH. The NADPH site is built by leucine 273 and glutamate 275.

It belongs to the NAD-dependent glycerol-3-phosphate dehydrogenase family.

Its subcellular location is the cytoplasm. It catalyses the reaction sn-glycerol 3-phosphate + NAD(+) = dihydroxyacetone phosphate + NADH + H(+). The catalysed reaction is sn-glycerol 3-phosphate + NADP(+) = dihydroxyacetone phosphate + NADPH + H(+). The protein operates within membrane lipid metabolism; glycerophospholipid metabolism. Its function is as follows. Catalyzes the reduction of the glycolytic intermediate dihydroxyacetone phosphate (DHAP) to sn-glycerol 3-phosphate (G3P), the key precursor for phospholipid synthesis. The polypeptide is Glycerol-3-phosphate dehydrogenase [NAD(P)+] (Brucella abortus (strain 2308)).